Consider the following 242-residue polypeptide: Phosphoribosyl isomerase A (242 aa).

Residue D12 is the Proton acceptor of the active site. The Proton donor role is filled by D131.

Belongs to the HisA/HisF family.

It localises to the cytoplasm. The catalysed reaction is 1-(5-phospho-beta-D-ribosyl)-5-[(5-phospho-beta-D-ribosylamino)methylideneamino]imidazole-4-carboxamide = 5-[(5-phospho-1-deoxy-D-ribulos-1-ylimino)methylamino]-1-(5-phospho-beta-D-ribosyl)imidazole-4-carboxamide. It catalyses the reaction N-(5-phospho-beta-D-ribosyl)anthranilate = 1-(2-carboxyphenylamino)-1-deoxy-D-ribulose 5-phosphate. It functions in the pathway amino-acid biosynthesis; L-histidine biosynthesis; L-histidine from 5-phospho-alpha-D-ribose 1-diphosphate: step 4/9. The protein operates within amino-acid biosynthesis; L-tryptophan biosynthesis; L-tryptophan from chorismate: step 3/5. Involved in both the histidine and tryptophan biosynthetic pathways. The sequence is that of Phosphoribosyl isomerase A from Streptomyces avermitilis (strain ATCC 31267 / DSM 46492 / JCM 5070 / NBRC 14893 / NCIMB 12804 / NRRL 8165 / MA-4680).